A 516-amino-acid polypeptide reads, in one-letter code: Maturase K (516 aa).

This sequence belongs to the intron maturase 2 family. MatK subfamily.

It is found in the plastid. It localises to the chloroplast. Functionally, usually encoded in the trnK tRNA gene intron. Probably assists in splicing its own and other chloroplast group II introns. This chain is Maturase K, found in Chara globularis (Fragile stonewort).